Reading from the N-terminus, the 502-residue chain is Cytochrome P450 3A5 (502 aa).

Cys441 lines the heme pocket.

The protein belongs to the cytochrome P450 family. Heme serves as cofactor.

The protein localises to the endoplasmic reticulum membrane. It localises to the microsome membrane. It catalyses the reaction an organic molecule + reduced [NADPH--hemoprotein reductase] + O2 = an alcohol + oxidized [NADPH--hemoprotein reductase] + H2O + H(+). The enzyme catalyses 17beta-estradiol + reduced [NADPH--hemoprotein reductase] + O2 = 2-hydroxy-17beta-estradiol + oxidized [NADPH--hemoprotein reductase] + H2O + H(+). The catalysed reaction is 17beta-estradiol + reduced [NADPH--hemoprotein reductase] + O2 = 4-hydroxy-17beta-estradiol + oxidized [NADPH--hemoprotein reductase] + H2O + H(+). It carries out the reaction estrone + reduced [NADPH--hemoprotein reductase] + O2 = 2-hydroxyestrone + oxidized [NADPH--hemoprotein reductase] + H2O + H(+). It catalyses the reaction estrone + reduced [NADPH--hemoprotein reductase] + O2 = 4-hydroxyestrone + oxidized [NADPH--hemoprotein reductase] + H2O + H(+). The enzyme catalyses testosterone + reduced [NADPH--hemoprotein reductase] + O2 = 6beta,17beta-dihydroxyandrost-4-en-3-one + oxidized [NADPH--hemoprotein reductase] + H2O + H(+). The catalysed reaction is androst-4-ene-3,17-dione + reduced [NADPH--hemoprotein reductase] + O2 = 6beta-hydroxyandrost-4-ene-3,17-dione + oxidized [NADPH--hemoprotein reductase] + H2O + H(+). It carries out the reaction progesterone + reduced [NADPH--hemoprotein reductase] + O2 = 6beta-hydroxyprogesterone + oxidized [NADPH--hemoprotein reductase] + H2O + H(+). It catalyses the reaction all-trans-retinol + reduced [NADPH--hemoprotein reductase] + O2 = all-trans-retinal + oxidized [NADPH--hemoprotein reductase] + 2 H2O + H(+). The enzyme catalyses all-trans-retinoate + reduced [NADPH--hemoprotein reductase] + O2 = all-trans-4-hydroxyretinoate + oxidized [NADPH--hemoprotein reductase] + H2O + H(+). The protein operates within steroid hormone biosynthesis. Its pathway is cofactor metabolism; retinol metabolism. Its function is as follows. A cytochrome P450 monooxygenase involved in the metabolism of steroid hormones and vitamins. Mechanistically, uses molecular oxygen inserting one oxygen atom into a substrate, and reducing the second into a water molecule, with two electrons provided by NADPH via cytochrome P450 reductase (NADPH--hemoprotein reductase). Catalyzes the hydroxylation of carbon-hydrogen bonds. Exhibits high catalytic activity for the formation of catechol estrogens from 17beta-estradiol (E2) and estrone (E1), namely 2-hydroxy E1 and E2. Catalyzes 6beta-hydroxylation of the steroid hormones testosterone, progesterone, and androstenedione. Catalyzes the oxidative conversion of all-trans-retinol to all-trans-retinal, a rate-limiting step for the biosynthesis of all-trans-retinoic acid (atRA). Further metabolizes all trans-retinoic acid (atRA) to 4-hydroxyretinoate and may play a role in hepatic atRA clearance. Also involved in the oxidative metabolism of xenobiotics, including calcium channel blocking drug nifedipine and immunosuppressive drug cyclosporine. The chain is Cytochrome P450 3A5 from Homo sapiens (Human).